Reading from the N-terminus, the 348-residue chain is Dihydroorotase (348 aa).

Positions 17 and 19 each coordinate Zn(2+). Residues 19–21 (HLR) and N45 contribute to the substrate site. Zn(2+)-binding residues include K103, H140, and H178. The residue at position 103 (K103) is an N6-carboxylysine. Substrate is bound at residue H140. L223 contributes to the substrate binding site. Residue D251 participates in Zn(2+) binding. The active site involves D251. Substrate-binding residues include H255 and A267.

It belongs to the metallo-dependent hydrolases superfamily. DHOase family. Class II DHOase subfamily. Homodimer. Requires Zn(2+) as cofactor.

It catalyses the reaction (S)-dihydroorotate + H2O = N-carbamoyl-L-aspartate + H(+). It participates in pyrimidine metabolism; UMP biosynthesis via de novo pathway; (S)-dihydroorotate from bicarbonate: step 3/3. In terms of biological role, catalyzes the reversible cyclization of carbamoyl aspartate to dihydroorotate. This Salmonella newport (strain SL254) protein is Dihydroorotase.